A 453-amino-acid polypeptide reads, in one-letter code: Ribosome biogenesis protein SSF2 (453 aa).

Basic residues predominate over residues 1 to 11 (MAKRRQKKRTH). Disordered regions lie at residues 1–22 (MAKR…ERDI), 275–327 (KAKH…KAIK), and 373–453 (AKMR…SEVE). One can recognise a Brix domain in the interval 26-348 (MVIRVGQTSL…LVKIEDGICS (323 aa)). The span at 373-398 (AKMRLKEQRRKEQEENIAKKKAVKDA) shows a compositional bias: basic and acidic residues. The span at 399 to 409 (KKQRKLERRKA) shows a compositional bias: basic residues. Acidic residues predominate over residues 440–453 (VPEDLDSDLFSEVE).

As to quaternary structure, part of a complex that includes BRX1, RPF1, RPF2 and SSF1 or SSF2.

The protein localises to the nucleus. It is found in the nucleolus. Its function is as follows. Required for biogenesis of the 60S ribosomal subunit. In Saccharomyces cerevisiae (strain ATCC 204508 / S288c) (Baker's yeast), this protein is Ribosome biogenesis protein SSF2 (SSF2).